The chain runs to 515 residues: MDLSDFHISTPLRYFHEEASLLWKLGVFAVLVYFLLPKPTYKTNVKVPTVKYMGPWMPEILSRIFFNSHAPTVIYKGYEKFKTSAFKVVKPDGDLVVLSTRYAEELRQMPSTTLNALEATFTDHVGGYTTILTDSHLHTETIQKKLTPAIGRLIPRMISELDHAFEVEFPTCDDQFASINPYTVFLRLVARVGARIFIGDELCREEKWLQASIDYTKNIFLTIALMRPMPGFLHPIVGRILPSSRSLKDQLSYIQQDLLGPVIKERRRLEASSDSEYKKPDDFLQWMMDLAQNENESHPDNLSHRLLGITSMAVVHTSAMSMTHILYDLLTMPDLIEPLRDEIRNEIKDWNKATQADLSRLIIMDSFLKESQRLNPPGDLSFHRVVKKDLTLSDGLFLPKGTHICMAAGPISKDPDVVSDPDTFDAFRFVKQRTATSGFVSTGPNNMHFGLGRYACPGRFFAAFVIKLILSRFLMDYDFKFETEHKERPKNLLIGDKIVPNVATPILIKRRATKA.

The chain crosses the membrane as a helical span at residues 20 to 36; the sequence is SLLWKLGVFAVLVYFLL. A heme-binding site is contributed by C456.

Belongs to the cytochrome P450 family. It depends on heme as a cofactor.

The protein resides in the membrane. It participates in secondary metabolite biosynthesis. Functionally, cytochrome P450 monooxygenase; part of the ATM2 gene cluster that mediates the biosynthesis of paxilline, a mycotoxin that acts as an inhibitor of mammalian maxi-K channels. PaxG, the geranylgeranyl diphosphate (GGPP) synthase is proposed to catalyze the first step in paxilline biosynthesis. Condensation of indole-3-glycerol phosphate with GGPP by paxC then forms 3-geranylgeranylindole (3-GGI), followed by epoxidation and cyclization of this intermediate (by paxM and paxB) to form paspaline. Paspaline is subsequently converted to 13-desoxypaxilline by paxP, the latter being then converted to paxilline by paxQ. Finally paxilline can be mono- and di-prenylated by paxD. PaxP can also utilized beta-paxitriol and alpha-PC-M6 as substrates converting them to paxilline. The chain is Cytochrome P450 monooxygenase paxP from Penicillium paxilli.